The primary structure comprises 1115 residues: Tbc2 translation factor, chloroplastic (1115 aa).

Low complexity-rich tracts occupy residues Thr69–Ser87 and Arg163–Ala175. Disordered stretches follow at residues Thr69–Leu90 and Arg163–Ser210. A compositionally biased stretch (gly residues) spans Arg176–Gly186. Positions Ser187 to Ser210 are enriched in low complexity. Tandem repeats lie at residues Leu483 to Ala521, Leu607 to Ala645, Leu685 to Ala723, Leu724 to Leu763, Met764 to Cys803, Leu804 to Arg842, Met843 to Arg880, Pro990 to Trp1029, and Trp1030 to Ala1068. The interval Leu483 to Ala1068 is 9 X 38 AA approximate repeats.

As to quaternary structure, part of a 400 kDa complex which is not stably associated with RNA.

The protein resides in the plastid. Its subcellular location is the chloroplast stroma. Functionally, required for expression of the chloroplast encoded psbC mRNA, most likely for translation initiation. Interacts with the 5'-UTR of psbC. In Chlamydomonas reinhardtii (Chlamydomonas smithii), this protein is Tbc2 translation factor, chloroplastic (TBC2).